The primary structure comprises 715 residues: Fatty acid oxidation complex subunit alpha (715 aa).

The segment at 1-190 (MIYEGKAITV…KVGAVDAVVA (190 aa)) is enoyl-CoA hydratase/isomerase. Asp297 lines the substrate pocket. The 3-hydroxyacyl-CoA dehydrogenase stretch occupies residues 312 to 715 (HDVKQAAVLG…MAKNGQRFFN (404 aa)). Residues Met325, Asp344, 401 to 403 (VVE), Lys408, and Ser430 contribute to the NAD(+) site. His451 functions as the For 3-hydroxyacyl-CoA dehydrogenase activity in the catalytic mechanism. Residue Asn454 participates in NAD(+) binding. Residues Asn501 and Tyr660 each coordinate substrate.

The protein in the N-terminal section; belongs to the enoyl-CoA hydratase/isomerase family. This sequence in the C-terminal section; belongs to the 3-hydroxyacyl-CoA dehydrogenase family. Heterotetramer of two alpha chains (FadB) and two beta chains (FadA).

It catalyses the reaction a (3S)-3-hydroxyacyl-CoA + NAD(+) = a 3-oxoacyl-CoA + NADH + H(+). The enzyme catalyses a (3S)-3-hydroxyacyl-CoA = a (2E)-enoyl-CoA + H2O. The catalysed reaction is a 4-saturated-(3S)-3-hydroxyacyl-CoA = a (3E)-enoyl-CoA + H2O. It carries out the reaction (3S)-3-hydroxybutanoyl-CoA = (3R)-3-hydroxybutanoyl-CoA. It catalyses the reaction a (3Z)-enoyl-CoA = a 4-saturated (2E)-enoyl-CoA. The enzyme catalyses a (3E)-enoyl-CoA = a 4-saturated (2E)-enoyl-CoA. It functions in the pathway lipid metabolism; fatty acid beta-oxidation. Its function is as follows. Involved in the aerobic and anaerobic degradation of long-chain fatty acids via beta-oxidation cycle. Catalyzes the formation of 3-oxoacyl-CoA from enoyl-CoA via L-3-hydroxyacyl-CoA. It can also use D-3-hydroxyacyl-CoA and cis-3-enoyl-CoA as substrate. This Pseudomonas entomophila (strain L48) protein is Fatty acid oxidation complex subunit alpha.